The following is a 141-amino-acid chain: MGAGILRVIIMDSENYVETHPSDDNEAMKTSDVYKVDKNLPKRFNNPDCFQGYSTKINHPFYQTSSQIYGSKRPTVHEMPTTFNGSYRKFSEHMLKSGMFRDNGFNTSIEKSKITGHDTIPMFQDRINFNYAYDSGNGPKN.

This sequence belongs to the PIERCE1 family.

Its subcellular location is the cytoplasm. It localises to the cytoskeleton. The protein resides in the cilium axoneme. Functionally, microtubule inner protein involved in the attachment of outer dynein arms (ODAs) to dynein-decorated doublet microtubules (DMTs) in cilia axoneme, which is required for motile cilia beating. Functions at the initial step of left-right asymmetry specification of the visceral organs. This is Piercer of microtubule wall 1 protein (pierce1) from Salmo salar (Atlantic salmon).